Reading from the N-terminus, the 295-residue chain is ATP synthase gamma chain (295 aa).

Belongs to the ATPase gamma chain family. As to quaternary structure, F-type ATPases have 2 components, CF(1) - the catalytic core - and CF(0) - the membrane proton channel. CF(1) has five subunits: alpha(3), beta(3), gamma(1), delta(1), epsilon(1). CF(0) has three main subunits: a, b and c.

Its subcellular location is the cell membrane. Produces ATP from ADP in the presence of a proton gradient across the membrane. The gamma chain is believed to be important in regulating ATPase activity and the flow of protons through the CF(0) complex. The chain is ATP synthase gamma chain from Acetivibrio thermocellus (strain ATCC 27405 / DSM 1237 / JCM 9322 / NBRC 103400 / NCIMB 10682 / NRRL B-4536 / VPI 7372) (Clostridium thermocellum).